A 235-amino-acid polypeptide reads, in one-letter code: Orotidine 5'-phosphate decarboxylase (235 aa).

Residues Asp-12, Lys-34, 61–70 (DMKLLDIDNT), Thr-116, Arg-177, Gln-186, and Arg-207 each bind substrate. Lys-63 acts as the Proton donor in catalysis.

The protein belongs to the OMP decarboxylase family. Type 1 subfamily. Homodimer.

It carries out the reaction orotidine 5'-phosphate + H(+) = UMP + CO2. It functions in the pathway pyrimidine metabolism; UMP biosynthesis via de novo pathway; UMP from orotate: step 2/2. In terms of biological role, catalyzes the decarboxylation of orotidine 5'-monophosphate (OMP) to uridine 5'-monophosphate (UMP). This is Orotidine 5'-phosphate decarboxylase from Rhizobium leguminosarum bv. trifolii (strain WSM2304).